The chain runs to 548 residues: Chaperonin GroEL (548 aa).

Residues 29–32 (TLGP), K50, 86–90 (DGTTT), G414, 478–480 (NAA), and D494 contribute to the ATP site.

The protein belongs to the chaperonin (HSP60) family. As to quaternary structure, forms a cylinder of 14 subunits composed of two heptameric rings stacked back-to-back. Interacts with the co-chaperonin GroES.

Its subcellular location is the cytoplasm. The catalysed reaction is ATP + H2O + a folded polypeptide = ADP + phosphate + an unfolded polypeptide.. Functionally, together with its co-chaperonin GroES, plays an essential role in assisting protein folding. The GroEL-GroES system forms a nano-cage that allows encapsulation of the non-native substrate proteins and provides a physical environment optimized to promote and accelerate protein folding. The protein is Chaperonin GroEL of Psychrobacter sp. (strain PRwf-1).